The following is a 247-amino-acid chain: Carboxy-S-adenosyl-L-methionine synthase (247 aa).

S-adenosyl-L-methionine contacts are provided by residues Tyr40, 65–67 (GAS), 90–91 (DN), 122–123 (DI), Asn137, and Arg204.

It belongs to the class I-like SAM-binding methyltransferase superfamily. Cx-SAM synthase family. In terms of assembly, homodimer.

It carries out the reaction prephenate + S-adenosyl-L-methionine = carboxy-S-adenosyl-L-methionine + 3-phenylpyruvate + H2O. Catalyzes the conversion of S-adenosyl-L-methionine (SAM) to carboxy-S-adenosyl-L-methionine (Cx-SAM). This is Carboxy-S-adenosyl-L-methionine synthase from Pseudomonas putida (strain W619).